A 217-amino-acid polypeptide reads, in one-letter code: ATP synthase subunit a (217 aa).

The next 6 membrane-spanning stretches (helical) occupy residues 5–25 (EHVI…LAAG), 63–83 (LIAS…LPFV), 89–109 (NINT…FEGF), 120–140 (FMGP…MSHL), 157–177 (GAIL…TLAV), and 191–213 (LAIV…GAVV).

This sequence belongs to the ATPase A chain family. F-type ATPases have 2 components, CF(1) - the catalytic core - and CF(0) - the membrane proton channel. CF(1) has five subunits: alpha(3), beta(3), gamma(1), delta(1), epsilon(1). CF(0) has three main subunits: a(1), b(2) and c(9-12). The alpha and beta chains form an alternating ring which encloses part of the gamma chain. CF(1) is attached to CF(0) by a central stalk formed by the gamma and epsilon chains, while a peripheral stalk is formed by the delta and b chains.

It is found in the cell inner membrane. In terms of biological role, key component of the proton channel; it plays a direct role in the translocation of protons across the membrane. The chain is ATP synthase subunit a from Hydrogenobaculum sp. (strain Y04AAS1).